Consider the following 906-residue polypeptide: Protein translocase subunit SecA (906 aa).

Residues Gln86, 104-108 (GEGKT), and Asp499 contribute to the ATP site. A disordered region spans residues 862-887 (KPVVSRIDPKDRNPDDPTSWGRVSRN). Zn(2+)-binding residues include Cys890, Cys892, Cys901, and His902.

The protein belongs to the SecA family. Monomer and homodimer. Part of the essential Sec protein translocation apparatus which comprises SecA, SecYEG and auxiliary proteins SecDF-YajC and YidC. Zn(2+) is required as a cofactor.

It localises to the cell inner membrane. It is found in the cytoplasm. The catalysed reaction is ATP + H2O + cellular proteinSide 1 = ADP + phosphate + cellular proteinSide 2.. Functionally, part of the Sec protein translocase complex. Interacts with the SecYEG preprotein conducting channel. Has a central role in coupling the hydrolysis of ATP to the transfer of proteins into and across the cell membrane, serving both as a receptor for the preprotein-SecB complex and as an ATP-driven molecular motor driving the stepwise translocation of polypeptide chains across the membrane. The sequence is that of Protein translocase subunit SecA from Rickettsia peacockii (strain Rustic).